A 374-amino-acid polypeptide reads, in one-letter code: Small ribosomal subunit protein uS4m (374 aa).

In terms of domain architecture, S4 RNA-binding spans 259-323 (GRLENFLMRL…KKLYFFIKSK (65 aa)).

The protein belongs to the universal ribosomal protein uS4 family.

The protein resides in the mitochondrion. The sequence is that of Small ribosomal subunit protein uS4m (RPS4) from Acanthamoeba castellanii (Amoeba).